The primary structure comprises 209 residues: MFHKELLKLYFICGTTTCQGKNLYTVVEEALKGGITLFQFREKGESALEGLEKLELAIQIKELCKKYNVPFIVNDDIDLAMEIDADGVHVGQDDIGVDEIRKLMPDKIIGLSIRNEEEFQQSKVEYVDYVGVGPVFDTQSKDDAGGAIGYEGLELMRKLLPQMPLVAIGGIQTKHIKDIIKTNMDGVSIISAISYAKNIEKTVREMSEQ.

4-amino-2-methyl-5-(diphosphooxymethyl)pyrimidine is bound by residues 39–43 (QFREK) and asparagine 74. Mg(2+)-binding residues include aspartate 75 and aspartate 94. Serine 112 is a 4-amino-2-methyl-5-(diphosphooxymethyl)pyrimidine binding site. Residue 138-140 (TQS) coordinates 2-[(2R,5Z)-2-carboxy-4-methylthiazol-5(2H)-ylidene]ethyl phosphate. Lysine 141 contacts 4-amino-2-methyl-5-(diphosphooxymethyl)pyrimidine. Residues glycine 170 and 190 to 191 (IS) contribute to the 2-[(2R,5Z)-2-carboxy-4-methylthiazol-5(2H)-ylidene]ethyl phosphate site.

It belongs to the thiamine-phosphate synthase family. It depends on Mg(2+) as a cofactor.

The catalysed reaction is 2-[(2R,5Z)-2-carboxy-4-methylthiazol-5(2H)-ylidene]ethyl phosphate + 4-amino-2-methyl-5-(diphosphooxymethyl)pyrimidine + 2 H(+) = thiamine phosphate + CO2 + diphosphate. It carries out the reaction 2-(2-carboxy-4-methylthiazol-5-yl)ethyl phosphate + 4-amino-2-methyl-5-(diphosphooxymethyl)pyrimidine + 2 H(+) = thiamine phosphate + CO2 + diphosphate. It catalyses the reaction 4-methyl-5-(2-phosphooxyethyl)-thiazole + 4-amino-2-methyl-5-(diphosphooxymethyl)pyrimidine + H(+) = thiamine phosphate + diphosphate. The protein operates within cofactor biosynthesis; thiamine diphosphate biosynthesis; thiamine phosphate from 4-amino-2-methyl-5-diphosphomethylpyrimidine and 4-methyl-5-(2-phosphoethyl)-thiazole: step 1/1. Functionally, condenses 4-methyl-5-(beta-hydroxyethyl)thiazole monophosphate (THZ-P) and 2-methyl-4-amino-5-hydroxymethyl pyrimidine pyrophosphate (HMP-PP) to form thiamine monophosphate (TMP). In Streptococcus pneumoniae (strain ATCC BAA-255 / R6), this protein is Thiamine-phosphate synthase 1.